The sequence spans 349 residues: Probable dual-specificity RNA methyltransferase RlmN (349 aa).

The active-site Proton acceptor is Glu94. A Radical SAM core domain is found at 100–321 (DEDRATLCVS…TQHGVFATIR (222 aa)). A disulfide bridge links Cys107 with Cys332. [4Fe-4S] cluster-binding residues include Cys114, Cys118, and Cys121. S-adenosyl-L-methionine-binding positions include 159–160 (GE), Ser191, 213–215 (SMH), and His289. Catalysis depends on Cys332, which acts as the S-methylcysteine intermediate.

This sequence belongs to the radical SAM superfamily. RlmN family. [4Fe-4S] cluster is required as a cofactor.

It is found in the cytoplasm. It catalyses the reaction adenosine(2503) in 23S rRNA + 2 reduced [2Fe-2S]-[ferredoxin] + 2 S-adenosyl-L-methionine = 2-methyladenosine(2503) in 23S rRNA + 5'-deoxyadenosine + L-methionine + 2 oxidized [2Fe-2S]-[ferredoxin] + S-adenosyl-L-homocysteine. The enzyme catalyses adenosine(37) in tRNA + 2 reduced [2Fe-2S]-[ferredoxin] + 2 S-adenosyl-L-methionine = 2-methyladenosine(37) in tRNA + 5'-deoxyadenosine + L-methionine + 2 oxidized [2Fe-2S]-[ferredoxin] + S-adenosyl-L-homocysteine. Specifically methylates position 2 of adenine 2503 in 23S rRNA and position 2 of adenine 37 in tRNAs. This is Probable dual-specificity RNA methyltransferase RlmN from Phocaeicola vulgatus (strain ATCC 8482 / DSM 1447 / JCM 5826 / CCUG 4940 / NBRC 14291 / NCTC 11154) (Bacteroides vulgatus).